The sequence spans 225 residues: Ribose-5-phosphate isomerase A (225 aa).

A disordered region spans residues 1-20 (MKQSGGTEAQKRRAGKQAAD). Substrate-binding positions include 32 to 35 (TGST), 86 to 89 (DGAD), and 98 to 101 (KGGG). Glu-107 functions as the Proton acceptor in the catalytic mechanism. Lys-125 is a substrate binding site.

It belongs to the ribose 5-phosphate isomerase family. In terms of assembly, homodimer.

It carries out the reaction aldehydo-D-ribose 5-phosphate = D-ribulose 5-phosphate. It functions in the pathway carbohydrate degradation; pentose phosphate pathway; D-ribose 5-phosphate from D-ribulose 5-phosphate (non-oxidative stage): step 1/1. Functionally, catalyzes the reversible conversion of ribose-5-phosphate to ribulose 5-phosphate. This Natronomonas pharaonis (strain ATCC 35678 / DSM 2160 / CIP 103997 / JCM 8858 / NBRC 14720 / NCIMB 2260 / Gabara) (Halobacterium pharaonis) protein is Ribose-5-phosphate isomerase A.